The sequence spans 444 residues: Protein phosphatase 2C homolog C10F6.17c (444 aa).

The region spanning 85–439 is the PPM-type phosphatase domain; that stretch reads RYDFNQVASN…DDITVTVIFF (355 aa). Aspartate 121, glycine 122, and aspartate 344 together coordinate Mn(2+).

Belongs to the PP2C family. It depends on Mg(2+) as a cofactor. The cofactor is Mn(2+).

Its subcellular location is the mitochondrion. It catalyses the reaction O-phospho-L-seryl-[protein] + H2O = L-seryl-[protein] + phosphate. It carries out the reaction O-phospho-L-threonyl-[protein] + H2O = L-threonyl-[protein] + phosphate. Functionally, involved in regulation of pyruvate dehydrogenase activity. This Schizosaccharomyces pombe (strain 972 / ATCC 24843) (Fission yeast) protein is Protein phosphatase 2C homolog C10F6.17c.